Consider the following 143-residue polypeptide: Large ribosomal subunit protein uL11 (143 aa).

Belongs to the universal ribosomal protein uL11 family. In terms of assembly, part of the ribosomal stalk of the 50S ribosomal subunit. Interacts with L10 and the large rRNA to form the base of the stalk. L10 forms an elongated spine to which L12 dimers bind in a sequential fashion forming a multimeric L10(L12)X complex. In terms of processing, one or more lysine residues are methylated.

Forms part of the ribosomal stalk which helps the ribosome interact with GTP-bound translation factors. The protein is Large ribosomal subunit protein uL11 of Borreliella burgdorferi (strain ATCC 35210 / DSM 4680 / CIP 102532 / B31) (Borrelia burgdorferi).